The sequence spans 345 residues: Nuclear distribution protein nudE-like 1 (345 aa).

A coiled-coil region spans residues 28 to 190 (QSFQEARDEL…LAVRERQQEV (163 aa)). The segment at 56-166 (VQAEQRNRDL…LDEKESLLVS (111 aa)) is self-association. The interaction with KATNB1 stretch occupies residues 64–189 (DLQADNQRLK…ELAVRERQQE (126 aa)). Positions 114–133 (YVRELEQANDDLERAKRATI) are required for interaction with PAFAH1B1. The interval 175–345 (RDLRQELAVR…SAPGMLPLSV (171 aa)) is interaction with CENPF. The interaction with YWHAE stretch occupies residues 189-256 (EVTRKSAPSS…SARISALNIV (68 aa)). The interval 191–345 (TRKSAPSSPT…SAPGMLPLSV (155 aa)) is interaction with NEFL. The interaction with KATNA1 stretch occupies residues 195–256 (APSSPTLDCE…SARISALNIV (62 aa)). Ser-215 carries the phosphoserine modification. Phosphothreonine; by CDK1 and MAPK1 is present on Thr-219. Ser-231 bears the Phosphoserine mark. An interaction with DISC1 region spans residues 241–280 (TSPLTPSARISALNIVGDLLRKVGALESKLAACRNFAKDQ). A Phosphoserine; by CDK1 modification is found at Ser-242. A Phosphothreonine; by CDK1 and MAPK1 modification is found at Thr-245. Residues 256–291 (VGDLLRKVGALESKLAACRNFAKDQASRKSYISGNV) are required for localization to the centrosome and interaction with dynein, dynactin, tubulin gamma, PCM1 and PCNT. Cys-273 carries S-palmitoyl cysteine; by ZDHHC2, ZDHHC3 and ZDHHC7 lipidation. The interval 315 to 345 (GAVNGFDPAPPPPGLGSSRPSSAPGMLPLSV) is disordered. Residues 329-339 (LGSSRPSSAPG) are compositionally biased toward low complexity. Residue Ser-344 is modified to Phosphoserine.

Belongs to the nudE family. Interacts with PLEKHM1 (via N- and C-terminus). Interacts with YWHAE. Interacts directly with NEFL and indirectly with NEFH. Interacts with microtubules. Self-associates. Interacts with DISC1, dynein, dynactin, tubulin gamma, KATNA1, KATNB1, PAFAH1B1, PCM1 and PCNT. Interacts (via C-terminus) with CENPF. Interacts with ZNF365. Interacts with GTP-bound RAB9A; the interaction may lead to RAB9A-dynein motor tethering. Post-translationally, phosphorylated in mitosis. Can be phosphorylated by CDK1, CDK5 and MAPK1. Phosphorylation by CDK5 promotes interaction with KATNA1 and YWHAE. In terms of processing, palmitoylation at Cys-273 reduces affinity for dynein. As to expression, expressed in brain, heart, kidney, liver, lung, pancreas, placenta and skeletal muscle.

The protein localises to the cytoplasm. The protein resides in the cytoskeleton. It is found in the microtubule organizing center. It localises to the centrosome. Its subcellular location is the chromosome. The protein localises to the centromere. The protein resides in the kinetochore. It is found in the spindle. In terms of biological role, required for organization of the cellular microtubule array and microtubule anchoring at the centrosome. May regulate microtubule organization at least in part by targeting the microtubule severing protein KATNA1 to the centrosome. Also positively regulates the activity of the minus-end directed microtubule motor protein dynein. May enhance dynein-mediated microtubule sliding by targeting dynein to the microtubule plus ends. Required for several dynein- and microtubule-dependent processes such as the maintenance of Golgi integrity, the centripetal motion of secretory vesicles and the coupling of the nucleus and centrosome. Also required during brain development for the migration of newly formed neurons from the ventricular/subventricular zone toward the cortical plate. Plays a role, together with DISC1, in the regulation of neurite outgrowth. Required for mitosis in some cell types but appears to be dispensible for mitosis in cortical neuronal progenitors, which instead requires NDE1. Facilitates the polymerization of neurofilaments from the individual subunits NEFH and NEFL. Positively regulates lysosome peripheral distribution and ruffled border formation in osteoclasts. Plays a role, together with DISC1, in the regulation of neurite outgrowth. May act as a RAB9A/B effector that tethers RAB9-associated late endosomes to the dynein motor for their retrograde transport to the trans-Golgi network. This is Nuclear distribution protein nudE-like 1 (NDEL1) from Homo sapiens (Human).